A 381-amino-acid polypeptide reads, in one-letter code: Creatine kinase M-type (381 aa).

Residues 11–98 (KLNFKAEEEY…FDPIIQDRHG (88 aa)) form the Phosphagen kinase N-terminal domain. The Phosphagen kinase C-terminal domain maps to 125–367 (YVLSSRVRTG…KLMVEMEKKL (243 aa)). 128 to 132 (SSRVR) is a binding site for ATP. Position 164 is a phosphoserine (S164). T166 carries the phosphothreonine modification. Phosphoserine is present on S178. At T180 the chain carries Phosphothreonine. H191 lines the ATP pocket. At S199 the chain carries Phosphoserine. R236 and R292 together coordinate ATP. Phosphothreonine is present on residues T313 and T322. Residues 320–325 (RGTGGV) and D335 each bind ATP. Position 372 is a phosphoserine (S372).

It belongs to the ATP:guanido phosphotransferase family. As to quaternary structure, dimer of identical or non-identical chains, which can be either B (brain type) or M (muscle type). With MM being the major form in skeletal muscle and myocardium, MB existing in myocardium, and BB existing in many tissues, especially brain.

It catalyses the reaction creatine + ATP = N-phosphocreatine + ADP + H(+). Its function is as follows. Reversibly catalyzes the transfer of phosphate between ATP and various phosphogens (e.g. creatine phosphate). Creatine kinase isoenzymes play a central role in energy transduction in tissues with large, fluctuating energy demands, such as skeletal muscle, heart, brain and spermatozoa. This is Creatine kinase M-type (CKM) from Sus scrofa (Pig).